Here is a 272-residue protein sequence, read N- to C-terminus: NAD kinase (272 aa).

The active-site Proton acceptor is Asp-62. NAD(+)-binding positions include 62–63, Arg-67, 129–130, Arg-140, Lys-157, Asp-159, 170–175, Ala-194, and Gln-229; these read DG, NE, and SSYSSS.

It belongs to the NAD kinase family. A divalent metal cation is required as a cofactor.

Its subcellular location is the cytoplasm. The catalysed reaction is NAD(+) + ATP = ADP + NADP(+) + H(+). In terms of biological role, involved in the regulation of the intracellular balance of NAD and NADP, and is a key enzyme in the biosynthesis of NADP. Catalyzes specifically the phosphorylation on 2'-hydroxyl of the adenosine moiety of NAD to yield NADP. The protein is NAD kinase of Thermoplasma volcanium (strain ATCC 51530 / DSM 4299 / JCM 9571 / NBRC 15438 / GSS1).